The primary structure comprises 523 residues: Keratin, type II cytoskeletal 71 (523 aa).

Residues Met1 to Gln129 are head. The coil 1A stretch occupies residues Glu130–Leu165. The IF rod domain occupies Glu130–Met443. Positions Gln166–Tyr184 are linker 1. Residues Ile185 to Ile276 form a coil 1B region. Positions Gln277–Ile300 are linker 12. The interval Ile301–Glu439 is coil 2. The tract at residues Glu440–Arg523 is tail. The segment at Gly492 to Arg523 is disordered. Residues Gly493 to Leu508 show a composition bias toward basic and acidic residues. Positions Lys510–Arg523 are enriched in polar residues.

The protein belongs to the intermediate filament family. In terms of assembly, heterodimer of a type I and a type II keratin. Associates with KRT16 and/or KRT17. As to expression, highly expressed in hair follicles from scalp. Specifically expressed in the inner root sheath (IRS) of the hair follicle. Present in the all 3 IRS layers: the cuticle, the Henle and the Huxley layers. Also detected in the pseudopods of specialized Huxley cells, termed Fluegelzellen, along the area of differentiated Henle cells (at protein level).

It localises to the cytoplasm. It is found in the cytoskeleton. In terms of biological role, plays a central role in hair formation. Essential component of keratin intermediate filaments in the inner root sheath (IRS) of the hair follicle. The chain is Keratin, type II cytoskeletal 71 (KRT71) from Homo sapiens (Human).